A 287-amino-acid polypeptide reads, in one-letter code: Telomere repeat-binding factor 5 (287 aa).

The region spanning 1-62 (MGNQKLKWTA…WRNLSVPPGT (62 aa)) is the HTH myb-type domain. Residues 28–58 (WKNILRDPEFADQLIHRSNIDLKDKWRNLSV) constitute a DNA-binding region (H-T-H motif). Residues 58–107 (VPPGTQSLTNKARPAKVKEEGDTPAADANDAVTIPRPIPTIPPPPGRRTL) are disordered. The span at 93-103 (RPIPTIPPPPG) shows a compositional bias: pro residues. In terms of domain architecture, H15 spans 119–193 (NAPRYDGVIF…SIQNFYKIPD (75 aa)). Residues 233–259 (AACKVVEAENKIDVAKLAAEEFEKMTK) are a coiled coil.

This sequence belongs to the histone H1/H5 family. SMH subfamily.

It is found in the nucleus. Its subcellular location is the chromosome. In terms of biological role, binds preferentially double-stranded telomeric repeats. The polypeptide is Telomere repeat-binding factor 5 (Arabidopsis thaliana (Mouse-ear cress)).